Consider the following 370-residue polypeptide: Cyanuric acid amidohydrolase (370 aa).

An RU A region spans residues 1 to 103 (MQAQVFRVPM…TIFTVQKTDN (103 aa)). Substrate contacts are provided by residues Arg51 and 82–83 (SG). The segment at 113-250 (RLAVQQIFTR…NEIIVMGNSR (138 aa)) is RU B. Lys163 is a catalytic residue. Substrate contacts are provided by residues Arg195 and 233–234 (SA). Ser233 serves as the catalytic Nucleophile. Residues 256–370 (LVIGHAEMKD…GPVAVIARTA (115 aa)) are RU C. Mg(2+) is bound at residue Glu303. Substrate-binding positions include Arg330 and 349 to 350 (SG). Mg(2+)-binding residues include Ser352, Gln355, Gly356, Pro357, and Gly360.

It belongs to the cyclic amide hydrolase (CyAH) family. Homotetramer.

The enzyme catalyses cyanurate + H2O = 1-carboxybiuret + H(+). It functions in the pathway xenobiotic degradation; atrazine degradation; biuret from cyanurate: step 1/1. Its activity is regulated as follows. Inhibited by barbituric acid. Its function is as follows. Responsible for the hydrolysis of cyanuric acid, an intermediate formed during catabolism of s-triazine based compounds in herbicides such as atrazine and polymers such as melamine. Catalyzes the hydrolytic opening of the s-triazine ring of cyanuric acid (2,4,6-trihydroxy-s-triazine) to yield carbon dioxide and carboxybiuret, which spontaneously decarboxylates to biuret. The protein is Cyanuric acid amidohydrolase (trzD) of Pseudomonas sp.